Reading from the N-terminus, the 85-residue chain is MGRSCKVIREDLANCLLHSDCMFVKKKSARECLKNKDELPEECKNLIEAYGECKRQMLDMTKRYRIAPEKNTDQDTEKPSNVDEQ.

Residues 18-61 form the CHCH domain; it reads HSDCMFVKKKSARECLKNKDELPEECKNLIEAYGECKRQMLDMT. Residues 21-32 carry the Cx10C motif motif; the sequence is CMFVKKKSAREC. 2 disulfides stabilise this stretch: Cys-21-Cys-53 and Cys-32-Cys-43. A Cx9C motif motif is present at residues 43-53; sequence CKNLIEAYGEC. The segment at 65 to 85 is disordered; sequence RIAPEKNTDQDTEKPSNVDEQ.

Belongs to the PET191 family.

The protein resides in the mitochondrion. Its function is as follows. Involved in the assembly of cytochrome c oxidase. The sequence is that of Mitochondrial protein pet191 homolog from Schizosaccharomyces pombe (strain 972 / ATCC 24843) (Fission yeast).